We begin with the raw amino-acid sequence, 153 residues long: Probable ubiquitin-conjugating enzyme E2 C (153 aa).

A UBC core domain is found at 6–153; that stretch reads SVSKRLQSEL…KRYQEATSRP (148 aa). Cys90 (glycyl thioester intermediate) is an active-site residue.

It belongs to the ubiquitin-conjugating enzyme family. As to quaternary structure, component of the APC/C complex. In terms of processing, autoubiquitinated by the APC/C complex, leading to its degradation by the proteasome.

It catalyses the reaction S-ubiquitinyl-[E1 ubiquitin-activating enzyme]-L-cysteine + [E2 ubiquitin-conjugating enzyme]-L-cysteine = [E1 ubiquitin-activating enzyme]-L-cysteine + S-ubiquitinyl-[E2 ubiquitin-conjugating enzyme]-L-cysteine.. The protein operates within protein modification; protein ubiquitination. Functionally, catalyzes the covalent attachment of ubiquitin to other proteins. Acts as an essential factor of the anaphase promoting complex/cyclosome (APC/C), a cell cycle-regulated ubiquitin ligase that controls progression through mitosis. Acts by initiating polyubiquitin chains on APC/C substrates, leading to the degradation of APC/C substrates by the proteasome and promoting mitotic exit. This chain is Probable ubiquitin-conjugating enzyme E2 C (ube2c), found in Dictyostelium discoideum (Social amoeba).